The following is a 58-amino-acid chain: MAVPKKRTSASMKKIRNHSWKIKSVEKSLKSFSLAQSVLSGRSKSFYYGTEKKPFQKN.

The protein belongs to the bacterial ribosomal protein bL32 family.

It localises to the plastid. The protein localises to the chloroplast. This is Large ribosomal subunit protein bL32c (rpl32) from Adiantum capillus-veneris (Maidenhair fern).